A 252-amino-acid polypeptide reads, in one-letter code: Ribose-5-phosphate isomerase (252 aa).

It belongs to the ribose 5-phosphate isomerase family.

It is found in the cytoplasm. The enzyme catalyses aldehydo-D-ribose 5-phosphate = D-ribulose 5-phosphate. Its pathway is carbohydrate degradation; pentose phosphate pathway; D-ribose 5-phosphate from D-ribulose 5-phosphate (non-oxidative stage): step 1/1. This is Ribose-5-phosphate isomerase (RKI1) from Debaryomyces hansenii (strain ATCC 36239 / CBS 767 / BCRC 21394 / JCM 1990 / NBRC 0083 / IGC 2968) (Yeast).